The following is a 258-amino-acid chain: MARPPMHGSVIVPDWHETVEGKEYLACILRKNRRREFGLLERPVLPPSVVIDTASYKIFVSGKSGVGKTALVAKLAGLEVPIVHHETTGIQTTVVFWPAKLKASDCVVMFRFEFWDCGESALKKFDHMLPACKENADAFLFLFSFTDRASFEDLPGQLTRVAGEAPGLVKIVIGSKFDQYMHTDVPARDLTAFRQAWELPLFRVKSVPGRRLADGRTLDGRAGLADTAHVLNGLAEQLWHQDQVAAGLLPSSPESAPG.

The tract at residues 51–258 is small GTPase-like; it reads IDTASYKIFV…LPSSPESAPG (208 aa). GTP-binding residues include Ser-64, Gly-65, Gly-67, Lys-68, Thr-69, Ala-70, Ile-82, His-84, Thr-87, Lys-176, Asp-178, and Ser-206.

Belongs to the small GTPase superfamily. Rab family. As to quaternary structure, interacts with FUZ. Associates with the CPLANE (ciliogenesis and planar polarity effectors) complex via its interaction with FUZ.

It is found in the cytoplasm. Its subcellular location is the cytoskeleton. The protein resides in the cilium basal body. It localises to the microtubule organizing center. The protein localises to the centrosome. It is found in the centriole. Its function is as follows. Required for efficient primary cilia initiation, regulating a late step in cilia initiation. Plays a role in the final maturation of the mother centriole and ciliary vesicle that allows extension of the ciliary axoneme. The sequence is that of Ciliogenesis and planar polarity effector 2 (Cplane2) from Mus musculus (Mouse).